A 258-amino-acid chain; its full sequence is Snake venom serine protease PA (258 aa).

The N-terminal stretch at 1–18 is a signal peptide; the sequence is MVLIRVLANLLILQLSYA. Residues 19 to 24 constitute a propeptide that is removed on maturation; it reads QKSPEL. A Peptidase S1 domain is found at 25–249; sequence VVGGDECNIN…YNDWIKSIIA (225 aa). 6 disulfide bridges follow: C31/C163, C50/C66, C98/C256, C142/C210, C174/C189, and C200/C225. A glycan (N-linked (GlcNAc...) asparagine) is linked at N44. Residues H65 and D110 each act as charge relay system in the active site. Catalysis depends on S204, which acts as the Charge relay system.

It belongs to the peptidase S1 family. Snake venom subfamily. As to quaternary structure, monomer. As to expression, expressed by the venom gland.

The protein resides in the secreted. Its function is as follows. Snake venom serine protease that may act in the hemostasis system of the prey. In Trimeresurus stejnegeri (Chinese green tree viper), this protein is Snake venom serine protease PA.